The chain runs to 220 residues: Zinc-finger homeodomain protein 2 (220 aa).

Residues 1–11 are compositionally biased toward acidic residues; the sequence is MNFEDQEEDME. The disordered stretch occupies residues 1–40; that stretch reads MNFEDQEEDMEMSGVNPPCGYDSLSGEGATSSGGGGVGRS. Gly residues predominate over residues 31–40; it reads SSGGGGVGRS. A ZF-HD dimerization-type zinc finger spans residues 49–98; sequence YRECLKNHAVNIGGHAVDGCCEFMPSGEDGTLDALKCAACGCHRNFHRKE. The disordered stretch occupies residues 100 to 160; that stretch reads ESIGGRAHRV…SSSGGTTKRF (61 aa). Positions 157 to 220 form a DNA-binding region, homeobox; atypical; it reads TKRFRTKFTA…NNKNSLGKKP (64 aa).

As to quaternary structure, homo or heterodimer. Interacts with ZHD1, ZHD3, ZHD4, ZHD5, ZHD6, ZHD7, ZHD8, ZHD9, ZHD10 and ZHD11. Mostly expressed in flowers and, to a lower extent, in inflorescence, stems and leaves.

The protein resides in the nucleus. In terms of biological role, essential protein. Putative transcription factor. This Arabidopsis thaliana (Mouse-ear cress) protein is Zinc-finger homeodomain protein 2 (ZHD1).